The primary structure comprises 772 residues: METTLAKTPEKRQVVFLAILLLLWEAGSEAIRYSIPEETESGYLVAHLAKDLGFRVGELATRRARIHHRGNKELLQLDVETGNLLLKEKPDREALCGATEPCVLHFQIILENPVQFFQTELQLTDINDHSPEFPDTEMLLKIQESTQPATVFLLKAAQDSDIGSNAVQNYTVSPNLHFHVVTLSRSDGRKYPELVLDRALDREEQPELTLILTALDGGAPPKSGTTTVRIEVVDINDNAPEFVQSLYSVEVPENSPLDALVVTVSARDLDAGIHGNVAYSLFQGGGGPQPFVIDEITGEIRLKGALDFEATSYYTMEIVATDSGGLSGKCTVAIQVLDVNDNAPKLTISSLTSSIPENAPEAVVAVFSVSDPDSGDNGRMVCSIQNELPFLLKPTFENYYTLAAEGPLDREIREEYNITIIVSDLGTPRLTTQHTITVQVVDINDNAPAFTQTSYTMFVHENNNPALHIGTISATDSDSGSNAHITYSLLPPHDLQLSLASLVSINADNGQLFALRAMDYEALQAFEFHVVARDGGSPALSSQALVRVVVLDDNDNAPFILYPMQNASAPCTELLPRAAEPGYLVTKVVAVDSDSGQNAWLSFQLLKATEPGLFSVWAHNGEVRTTRLLSERDVPKHRLLLLVKDNGEPPRSASVTLHVLLVDGFSQPYLPLPEVQHDSSQDEDMLTLYLVIALASVSSLFLLSVLLFVGVRLCRRVREASLGACSVPEGHFSGHLVDVSGMGTLSQSYQYEVCLSGDSGTTDFKFLNHYSQ.

Positions 1 to 28 (METTLAKTPEKRQVVFLAILLLLWEAGS) are cleaved as a signal peptide. Cadherin domains lie at 31-133 (IRYS…SPEF), 134-242 (PDTE…APEF), 243-346 (VQSL…APKL), 347-450 (TISS…APAF), and 451-560 (TQTS…APFI). Over 31–690 (IRYSIPEETE…QDEDMLTLYL (660 aa)) the chain is Extracellular. The cysteines at positions 96 and 102 are disulfide-linked. The N-linked (GlcNAc...) asparagine glycan is linked to Asn169. The O-linked (Man) serine glycan is linked to Ser223. Thr225 carries O-linked (Man) threonine glycosylation. N-linked (GlcNAc...) asparagine glycosylation is present at Asn417. An N-linked (GlcNAc...) asparagine glycan is attached at Asn566. The Cadherin 6 domain maps to 575–675 (LPRAAEPGYL…SQPYLPLPEV (101 aa)). The chain crosses the membrane as a helical span at residues 691–711 (VIALASVSSLFLLSVLLFVGV). Topologically, residues 712–772 (RLCRRVREAS…DFKFLNHYSQ (61 aa)) are cytoplasmic.

Forms homodimers in trans (molecules expressed by two different cells). Forms promiscuous heterodimers in cis (at the plasma membrane of the same cell) with other protocadherins.

The protein resides in the cell membrane. In terms of biological role, calcium-dependent cell-adhesion protein involved in cells self-recognition and non-self discrimination. Thereby, it is involved in the establishment and maintenance of specific neuronal connections in the brain. This is Protocadherin beta-6 from Mus musculus (Mouse).